Reading from the N-terminus, the 188-residue chain is Peptidyl-tRNA hydrolase (188 aa).

Tyr-14 contributes to the tRNA binding site. His-19 functions as the Proton acceptor in the catalytic mechanism. TRNA is bound by residues Tyr-64, Asn-66, and Asn-113.

The protein belongs to the PTH family. Monomer.

It is found in the cytoplasm. The enzyme catalyses an N-acyl-L-alpha-aminoacyl-tRNA + H2O = an N-acyl-L-amino acid + a tRNA + H(+). In terms of biological role, hydrolyzes ribosome-free peptidyl-tRNAs (with 1 or more amino acids incorporated), which drop off the ribosome during protein synthesis, or as a result of ribosome stalling. Its function is as follows. Catalyzes the release of premature peptidyl moieties from peptidyl-tRNA molecules trapped in stalled 50S ribosomal subunits, and thus maintains levels of free tRNAs and 50S ribosomes. This Chloroflexus aurantiacus (strain ATCC 29364 / DSM 637 / Y-400-fl) protein is Peptidyl-tRNA hydrolase.